A 31-amino-acid polypeptide reads, in one-letter code: Cytochrome b6-f complex subunit 6 (31 aa).

A helical membrane pass occupies residues isoleucine 4–serine 26.

It belongs to the PetL family. In terms of assembly, the 4 large subunits of the cytochrome b6-f complex are cytochrome b6, subunit IV (17 kDa polypeptide, PetD), cytochrome f and the Rieske protein, while the 4 small subunits are PetG, PetL, PetM and PetN. The complex functions as a dimer.

Its subcellular location is the plastid. The protein resides in the chloroplast thylakoid membrane. In terms of biological role, component of the cytochrome b6-f complex, which mediates electron transfer between photosystem II (PSII) and photosystem I (PSI), cyclic electron flow around PSI, and state transitions. PetL is important for photoautotrophic growth as well as for electron transfer efficiency and stability of the cytochrome b6-f complex. The protein is Cytochrome b6-f complex subunit 6 of Acorus calamus (Sweet flag).